The following is a 218-amino-acid chain: Thymidylate kinase (218 aa).

15–22 (GLDRSGKS) lines the ATP pocket.

This sequence belongs to the thymidylate kinase family.

The enzyme catalyses dTMP + ATP = dTDP + ADP. It functions in the pathway pyrimidine metabolism; dTTP biosynthesis. Its function is as follows. Catalyzes the conversion of dTMP to dTDP. In Caenorhabditis elegans, this protein is Thymidylate kinase.